A 387-amino-acid chain; its full sequence is Major outer membrane porin (387 aa).

The signal sequence occupies residues 1-22 (MKKLLKSVLAFAVLGSASSLHA).

The protein belongs to the chlamydial porin (CP) (TC 1.B.2) family. As to quaternary structure, part of a disulfide cross-linked outer membrane complex (COMC) composed of the major outer membrane porin (MOMP), the small cysteine-rich protein (OmcA) and the large cysteine-rich periplasmic protein (OmcB).

The protein localises to the cell outer membrane. In terms of biological role, in elementary bodies (EBs, the infectious stage, which is able to survive outside the host cell) provides the structural integrity of the outer envelope through disulfide cross-links with the small cysteine-rich protein and the large cysteine-rich periplasmic protein. It has been described in publications as the Sarkosyl-insoluble COMC (Chlamydia outer membrane complex), and serves as the functional equivalent of peptidoglycan. Functionally, permits diffusion of specific solutes through the outer membrane. This is Major outer membrane porin (ompA) from Chlamydia muridarum (strain MoPn / Nigg).